The following is a 430-amino-acid chain: DNA repair protein recA homolog 3, mitochondrial (430 aa).

Residues 1–35 constitute a mitochondrion transit peptide; it reads MARILRNVYSLRSSLFSSELLRRSVVGTSFQLRGF. 119-126 is an ATP binding site; the sequence is GPEASGKT. Residues 385–415 form a disordered region; it reads DEAADKETESESEEEDSLRVVVSPDNTDDES.

It belongs to the RecA family.

It is found in the mitochondrion. Involved in recombination ability and DNA strand transfer activity. The protein is DNA repair protein recA homolog 3, mitochondrial of Arabidopsis thaliana (Mouse-ear cress).